The chain runs to 562 residues: Arginine--tRNA ligase (562 aa).

The 'HIGH' region motif lies at 122–132; that stretch reads PNIAKPISMGH.

Belongs to the class-I aminoacyl-tRNA synthetase family. Monomer.

Its subcellular location is the cytoplasm. It carries out the reaction tRNA(Arg) + L-arginine + ATP = L-arginyl-tRNA(Arg) + AMP + diphosphate. In Pediococcus pentosaceus (strain ATCC 25745 / CCUG 21536 / LMG 10740 / 183-1w), this protein is Arginine--tRNA ligase.